The chain runs to 457 residues: Glycine receptor subunit alpha-1 (457 aa).

The signal sequence occupies residues M1–A28. The Extracellular segment spans residues A29–Y250. The N-linked (GlcNAc...) asparagine glycan is linked to N66. R93 and S157 together coordinate glycine. A disulfide bridge connects residues C166 and C180. Positions 220 and 222 each coordinate Zn(2+). A disulfide bond links C226 and C237. Strychnine is bound at residue Y230–F235. T232 is a glycine binding site. Position 243 (H243) interacts with Zn(2+). A helical transmembrane segment spans residues Y251–I272. Residues N273 to A277 are Cytoplasmic-facing. A helical membrane pass occupies residues P278–S298. Residues R299–K309 lie on the Extracellular side of the membrane. Residues A310 to A330 form a helical membrane-spanning segment. Residues A331 to K425 lie on the Cytoplasmic side of the membrane. The disordered stretch occupies residues K391–E410. Residues I426–Y446 traverse the membrane as a helical segment. Topologically, residues K447–Q457 are extracellular.

This sequence belongs to the ligand-gated ion channel (TC 1.A.9) family. Glycine receptor (TC 1.A.9.3) subfamily. GLRA1 sub-subfamily. Interacts with GLRB to form heteropentameric channels; this is probably the predominant form in vivo. Heteropentamer composed of four GLRA1 subunits and one GLRB subunit. Heteropentamer composed of two GLRA1 and three GLRB. Heteropentamer composed of three GLRA1 and two GLRB. Homopentamer (in vitro). Both homopentamers and heteropentamers form functional ion channels, but their characteristics are subtly different.

The protein resides in the postsynaptic cell membrane. The protein localises to the synapse. It is found in the perikaryon. It localises to the cell projection. Its subcellular location is the dendrite. The protein resides in the cell membrane. It catalyses the reaction chloride(in) = chloride(out). Channel opening is triggered by extracellular glycine. Channel characteristics depend on the subunit composition; heteropentameric channels are activated by lower glycine levels and display faster desensitization. Channel opening is also triggered by taurine and beta-alanine. Channel activity is potentiated by nanomolar concentrations of Zn(2+); half-maximal activation is observed with 37 nM Zn(2+). Inhibited by higher Zn(2+) levels; haf-maximal inhibition occurs at 20 uM Zn(2+). Inhibited by strychnine. Strychnine binding locks the channel in a closed conformation and prevents channel opening in response to extracellular glycine. Inhibited by lindane. Inhibited by picrotoxin. Subunit of heteromeric glycine-gated chloride channels. Plays an important role in the down-regulation of neuronal excitability. Contributes to the generation of inhibitory postsynaptic currents. Channel activity is potentiated by ethanol. Potentiation of channel activity by intoxicating levels of ethanol contribute to the sedative effects of ethanol. In Homo sapiens (Human), this protein is Glycine receptor subunit alpha-1 (GLRA1).